The primary structure comprises 255 residues: tRNA pseudouridine synthase A (255 aa).

Asp60 acts as the Nucleophile in catalysis. Substrate is bound at residue Tyr118.

The protein belongs to the tRNA pseudouridine synthase TruA family. In terms of assembly, homodimer.

It catalyses the reaction uridine(38/39/40) in tRNA = pseudouridine(38/39/40) in tRNA. Formation of pseudouridine at positions 38, 39 and 40 in the anticodon stem and loop of transfer RNAs. This chain is tRNA pseudouridine synthase A, found in Leuconostoc mesenteroides subsp. mesenteroides (strain ATCC 8293 / DSM 20343 / BCRC 11652 / CCM 1803 / JCM 6124 / NCDO 523 / NBRC 100496 / NCIMB 8023 / NCTC 12954 / NRRL B-1118 / 37Y).